The following is a 123-amino-acid chain: Small ribosomal subunit protein uS12 (123 aa).

Positions 1–24 are disordered; it reads MPTINQLIRKERKKQVKKSKSPAL. The segment covering 10-20 has biased composition (basic residues); sequence KERKKQVKKSK. The residue at position 89 (aspartate 89) is a 3-methylthioaspartic acid.

The protein belongs to the universal ribosomal protein uS12 family. As to quaternary structure, part of the 30S ribosomal subunit. Contacts proteins S8 and S17. May interact with IF1 in the 30S initiation complex.

In terms of biological role, with S4 and S5 plays an important role in translational accuracy. Interacts with and stabilizes bases of the 16S rRNA that are involved in tRNA selection in the A site and with the mRNA backbone. Located at the interface of the 30S and 50S subunits, it traverses the body of the 30S subunit contacting proteins on the other side and probably holding the rRNA structure together. The combined cluster of proteins S8, S12 and S17 appears to hold together the shoulder and platform of the 30S subunit. The chain is Small ribosomal subunit protein uS12 from Sulfurovum sp. (strain NBC37-1).